The primary structure comprises 510 residues: 2,3-bisphosphoglycerate-independent phosphoglycerate mutase (510 aa).

2 residues coordinate Mn(2+): Asp12 and Ser62. The active-site Phosphoserine intermediate is Ser62. Residues His123, 153–154 (RD), Arg185, Arg191, 260–263 (RPDR), and Lys335 contribute to the substrate site. Mn(2+) contacts are provided by Asp402, His406, Asp443, His444, and His461.

The protein belongs to the BPG-independent phosphoglycerate mutase family. Monomer. It depends on Mn(2+) as a cofactor.

The enzyme catalyses (2R)-2-phosphoglycerate = (2R)-3-phosphoglycerate. Its pathway is carbohydrate degradation; glycolysis; pyruvate from D-glyceraldehyde 3-phosphate: step 3/5. In terms of biological role, catalyzes the interconversion of 2-phosphoglycerate and 3-phosphoglycerate. The polypeptide is 2,3-bisphosphoglycerate-independent phosphoglycerate mutase (Listeria monocytogenes serotype 4b (strain F2365)).